The chain runs to 62 residues: Small ribosomal subunit protein eS27 (62 aa).

Zn(2+) is bound by residues cysteine 17, cysteine 20, cysteine 36, and cysteine 39. The C4-type zinc finger occupies 17–39 (CPDCENEQVVFERASTVVECTVC).

The protein belongs to the eukaryotic ribosomal protein eS27 family. Part of the 30S ribosomal subunit. Requires Zn(2+) as cofactor.

The polypeptide is Small ribosomal subunit protein eS27 (Methanoculleus marisnigri (strain ATCC 35101 / DSM 1498 / JR1)).